The primary structure comprises 798 residues: Metabotropic glutamate receptor-like protein A (798 aa).

Residues 1-23 (MNKLKFLIILFITFLFNLKYINS) form the signal peptide. Residues 24–388 (LKQCKISVLL…DYSNSMKLGL (365 aa)) lie on the Extracellular side of the membrane. Asparagine 186, asparagine 275, and asparagine 320 each carry an N-linked (GlcNAc...) asparagine glycan. Residues 389-409 (TIVSGFCILFCIISMVLVIMF) traverse the membrane as a helical segment. Topologically, residues 410 to 419 (RHAKIIKSAS) are cytoplasmic. The chain crosses the membrane as a helical span at residues 420–440 (PIFCLLILFGCIIIFSGCIIF). Residues 441-447 (SLSPTDG) are Extracellular-facing. The helical transmembrane segment at 448–468 (ICGARVWLLSIGYTIFLGSLL) threads the bilayer. Over 469–494 (VKNWRIWLLFDNPKLKKRSITNWKLY) the chain is Cytoplasmic. Residues 495-515 (PFVAGILAADVLILALWQGLG) traverse the membrane as a helical segment. The Extracellular portion of the chain corresponds to 516–545 (DIRSESRIGIDSLTKYQYANVCSSNDQGSV). The chain crosses the membrane as a helical span at residues 546–566 (ALYILLVFHGIKLLAACFISF). The Cytoplasmic segment spans residues 567–580 (KIKAVDIEEFNESK). A helical transmembrane segment spans residues 581–601 (PIASSIYIITFCLFIVIPLMV). Residues 602–609 (SPQSVASQ) are Extracellular-facing. A helical transmembrane segment spans residues 610–630 (VITIVVCAIVTTLISISLLFG). The Cytoplasmic segment spans residues 631–798 (SKFYMMATQG…NQSEIDPDDV (168 aa)). Residues 714-771 (AEQDSKLDLENQNDENEIENNQNNQNNIVEDCQKVEKLEKDENLEKDENLEKDENLEK) are a coiled coil. Basic and acidic residues predominate over residues 752-774 (EKDENLEKDENLEKDENLEKDNE). Positions 752–798 (EKDENLEKDENLEKDENLEKDNENQSIIQKKRLSKNFNQSEIDPDDV) are disordered.

The protein in the N-terminal section; belongs to the BMP lipoprotein family. It in the C-terminal section; belongs to the G-protein coupled receptor 3 family. GABA-B receptor subfamily.

It is found in the membrane. The protein localises to the cytoplasm. Its subcellular location is the cell cortex. It localises to the perinuclear region. Its function is as follows. May play an important role in the terminal differentiation. This chain is Metabotropic glutamate receptor-like protein A (grlA), found in Dictyostelium discoideum (Social amoeba).